Consider the following 114-residue polypeptide: Nucleoid-associated protein MAB_0319 (114 aa).

It belongs to the YbaB/EbfC family. Homodimer.

Its subcellular location is the cytoplasm. The protein localises to the nucleoid. Binds to DNA and alters its conformation. May be involved in regulation of gene expression, nucleoid organization and DNA protection. In Mycobacteroides abscessus (strain ATCC 19977 / DSM 44196 / CCUG 20993 / CIP 104536 / JCM 13569 / NCTC 13031 / TMC 1543 / L948) (Mycobacterium abscessus), this protein is Nucleoid-associated protein MAB_0319.